Here is a 263-residue protein sequence, read N- to C-terminus: Ribosome maturation factor RimP (263 aa).

The tract at residues 192 to 263 is disordered; the sequence is EREMKRDLGI…RGEIDPIEGE (72 aa). Residues 217–231 are compositionally biased toward basic residues; the sequence is PARRNAPKPKLKSTA. A compositionally biased stretch (basic and acidic residues) spans 232 to 257; it reads KAHEKKPPKNTKEHRLAAERLRRGEI.

The protein belongs to the RimP family.

The protein resides in the cytoplasm. Functionally, required for maturation of 30S ribosomal subunits. In Nitrobacter hamburgensis (strain DSM 10229 / NCIMB 13809 / X14), this protein is Ribosome maturation factor RimP.